Consider the following 111-residue polypeptide: Disintegrin CV-11-alpha (111 aa).

The signal sequence occupies residues 1 to 20; the sequence is MIQVLLVIICLAVFPYQGSS. A propeptide spanning residues 21–46 is cleaved from the precursor; it reads IILESGNVNDFELVYPKKVTVLPTGA. The Disintegrin domain maps to 47–111; it reads MNSAHPCCDP…SDCPRNPWKD (65 aa). 4 disulfide bridges follow: C53–C76, C67–C73, C72–C97, and C85–C104. The Cell attachment site signature appears at 89 to 91; it reads KGD.

Belongs to the disintegrin family. Dimeric disintegrin subfamily. As to quaternary structure, heterodimer with subunit beta; disulfide-linked. Expressed by the venom gland.

Its subcellular location is the secreted. Its function is as follows. Inhibits ADP-induced human platelet aggregation. Antagonist of alpha-IIb/beta-3 (ITGA2B/ITGB3). The polypeptide is Disintegrin CV-11-alpha (Cerastes vipera (Sahara sand viper)).